Reading from the N-terminus, the 246-residue chain is Proteasome subunit alpha (246 aa).

It belongs to the peptidase T1A family. The 20S proteasome core is composed of 14 alpha and 14 beta subunits that assemble into four stacked heptameric rings, resulting in a barrel-shaped structure. The two inner rings, each composed of seven catalytic beta subunits, are sandwiched by two outer rings, each composed of seven alpha subunits. The catalytic chamber with the active sites is on the inside of the barrel. Has a gated structure, the ends of the cylinder being occluded by the N-termini of the alpha-subunits. Is capped by the proteasome-associated ATPase, ARC. Can also interact with the bacterial proteasome activator Bpa through the C-terminal hydrophobic-tyrosine-X motif (HbYX motif) of Bpa; Bpa forms a homooligomeric ring-like structure which stacks co-axially with the proteasomal alpha-rings. In terms of processing, pupylated at an undetermined lysine residue by the prokaryotic ubiquitin-like protein Pup with the help of the ligase PafA, which leads to its degradation by the proteasome and thereby constitutes a negative auto-regulation.

The protein localises to the cytoplasm. Its pathway is protein degradation; proteasomal Pup-dependent pathway. With respect to regulation, the formation of the proteasomal ATPase ARC-20S proteasome complex, likely via the docking of the C-termini of ARC into the intersubunit pockets in the alpha-rings, may trigger opening of the gate for substrate entry. Interconversion between the open-gate and close-gate conformations leads to a dynamic regulation of the 20S proteasome proteolysis activity. PPS auto-regulates its own activity via pupylation and degradation of its components. Peptidolytic activity is inhibited by N-acetyl-Leu-Leu-norleucinal (Ac-LLnL) in vitro. Component of the proteasome core, a large protease complex with broad specificity involved in protein degradation. The M.smegmatis proteasome is able to cleave oligopeptides after hydrophobic residues, thus displaying chymotrypsin-like activity. In complex with the ATPase Mpa, degrades protein targets conjugated to a prokaryotic ubiquitin-like protein (Pup). Identified substrates of the M.smegmatis proteasome are the pupylated SodA and Ino1 proteins. The Pup-proteasome system (PPS) is essential for survival under starvation; PPS likely functions to recycle amino acids under nitrogen starvation, thereby enabling the cell to maintain basal metabolic activities. The polypeptide is Proteasome subunit alpha (Mycolicibacterium smegmatis (strain ATCC 700084 / mc(2)155) (Mycobacterium smegmatis)).